The chain runs to 145 residues: MATNTKYKRDAISIMRDGIKSRYSKDGCCAICGSSEDLELHHYHTISQLIKKFAKELQLDFTDENIVLSNREAFYKKYEHELVRDVVTLCQHHHQLLHKVYTKEPPLFSANKQKAWVQKQKDKIQNPQEKTQVKTETKSGFARFL.

The tract at residues Asn126–Leu145 is disordered.

Its function is as follows. Endonuclease responsible for the single-chain interruptions (nicks) located at specific positions in the minus strand of the viral genome. This is Nicking endonuclease from Escherichia phage T5 (Enterobacteria phage T5).